The following is a 339-amino-acid chain: Phenylalanine--tRNA ligase alpha subunit (339 aa).

Glutamate 254 is a Mg(2+) binding site.

The protein belongs to the class-II aminoacyl-tRNA synthetase family. Phe-tRNA synthetase alpha subunit type 1 subfamily. Tetramer of two alpha and two beta subunits. Requires Mg(2+) as cofactor.

The protein localises to the cytoplasm. The catalysed reaction is tRNA(Phe) + L-phenylalanine + ATP = L-phenylalanyl-tRNA(Phe) + AMP + diphosphate + H(+). In Caldanaerobacter subterraneus subsp. tengcongensis (strain DSM 15242 / JCM 11007 / NBRC 100824 / MB4) (Thermoanaerobacter tengcongensis), this protein is Phenylalanine--tRNA ligase alpha subunit.